The following is a 245-amino-acid chain: Lactate utilization protein A 1 (245 aa).

It belongs to the LutA/YkgE family.

Is involved in L-lactate degradation and allows cells to grow with lactate as the sole carbon source. This chain is Lactate utilization protein A 1, found in Bacillus mycoides (strain KBAB4) (Bacillus weihenstephanensis).